The primary structure comprises 1040 residues: Multidrug resistance protein MdtB (1040 aa).

Helical transmembrane passes span 15 to 37 (LFILRPVATTLLMAAILLAGIIG), 345 to 362 (FELMLAIALVVMIIYLFL), 367 to 389 (ATIIPGVAVPLSLIGTFAVMVFL), 396 to 418 (LTLMALTIATGFVVDDAIVVIEN), 438 to 460 (GEIGFTIISLTFSLIAVLIPLLF), 472 to 494 (FAVTLAVAILISAVVSLTLTPMM), 535 to 557 (HPWLTLSVAFATLLLSVMLWITI), 867 to 889 (VWLIVAAVVAMYIVLGVLYESFI), 909 to 931 (LIIAGSELDIIAIIGIILLIGIV), 968 to 990 (ILMTTLAALLGALPLMLSTGVGA), and 1000 to 1022 (MVGGLLVSQVLTLFTTPVIYLLF).

The protein belongs to the resistance-nodulation-cell division (RND) (TC 2.A.6) family. MdtB subfamily. As to quaternary structure, part of a tripartite efflux system composed of MdtA, MdtB and MdtC. MdtB forms a heteromultimer with MdtC.

The protein localises to the cell inner membrane. The protein is Multidrug resistance protein MdtB of Salmonella typhi.